A 162-amino-acid polypeptide reads, in one-letter code: Caveolin-2 (162 aa).

Over 1–86 the chain is Cytoplasmic; sequence MGLETEKADV…FEISKYVIYK (86 aa). Y19 carries the phosphotyrosine; by SRC modification. S20 and S23 each carry phosphoserine. Position 27 is a phosphotyrosine; by SRC (Y27). Residue S36 is modified to Phosphoserine. Positions 87–107 form an intramembrane region, helical; the sequence is FLTVFLAIPLAFAAGIIFATL. The Cytoplasmic segment spans residues 108-162; it reads SCLHIWIIMPFVKTCLMVLPSVQTIWRSVTDAVIAPLCTSVGRVFSSVSLQLSRD.

It belongs to the caveolin family. As to quaternary structure, monomer or homodimer. Interacts with CAV1; the interaction forms a stable heterooligomeric complex that is required for targeting to lipid rafts and for caveolae formation. Tyrosine phosphorylated forms do not form heterooligomers with the Tyr-19-phosphorylated form existing as a monomer or dimer, and the Tyr-27-form as a monomer only. Interacts (tyrosine phosphorylated form) with the SH2 domain-containing proteins, RASA1, NCK1 and SRC. Interacts (tyrosine phosphorylated form) with INSR, the interaction (Tyr-27-phosphorylated form) is increased on insulin stimulation. Interacts (Tyr-19 phosphorylated form) with MAPK1 (phosphorylated form); the interaction, promoted by insulin, leads to nuclear location and MAPK1 activation. Interacts with STAT3; the interaction is increased on insulin-induced tyrosine phosphorylation leading to STAT activation. Phosphorylated on serine and tyrosine residues. CAV1 promotes phosphorylation on Ser-23 which then targets the complex to the plasma membrane, lipid rafts and caveolae. Phosphorylation on Ser-36 appears to modulate mitosis in endothelial cells. Phosphorylation on both Tyr-19 and Tyr-27 is required for insulin-induced 'Ser-727' phosphorylation of STAT3 and its activation. Phosphorylation on Tyr-19 is required for insulin-induced phosphorylation of MAPK1 and DNA binding of STAT3. Tyrosine phosphorylation is induced by both EGF and insulin (By. similarity).

It is found in the nucleus. It localises to the cytoplasm. The protein localises to the golgi apparatus membrane. The protein resides in the cell membrane. Its subcellular location is the membrane. It is found in the caveola. Its function is as follows. May act as a scaffolding protein within caveolar membranes. Interacts directly with G-protein alpha subunits and can functionally regulate their activity. Acts as an accessory protein in conjunction with CAV1 in targeting to lipid rafts and driving caveolae formation. The Ser-36 phosphorylated form has a role in modulating mitosis in endothelial cells. Positive regulator of cellular mitogenesis of the MAPK signaling pathway. Required for the insulin-stimulated nuclear translocation and activation of MAPK1 and STAT3, and the subsequent regulation of cell cycle progression. The protein is Caveolin-2 (CAV2) of Carollia perspicillata (Seba's short-tailed bat).